The chain runs to 302 residues: Glycine--tRNA ligase alpha subunit (302 aa).

It belongs to the class-II aminoacyl-tRNA synthetase family. In terms of assembly, tetramer of two alpha and two beta subunits.

It is found in the cytoplasm. The catalysed reaction is tRNA(Gly) + glycine + ATP = glycyl-tRNA(Gly) + AMP + diphosphate. The chain is Glycine--tRNA ligase alpha subunit from Haemophilus influenzae (strain PittGG).